The following is a 422-amino-acid chain: Probable protein phosphatase 2C 43 (422 aa).

The 277-residue stretch at 117-393 (SSGSYADKGD…DNVTVVVICF (277 aa)) folds into the PPM-type phosphatase domain. Positions 163, 164, 341, and 384 each coordinate Mn(2+).

This sequence belongs to the PP2C family. Requires Mg(2+) as cofactor. It depends on Mn(2+) as a cofactor.

The enzyme catalyses O-phospho-L-seryl-[protein] + H2O = L-seryl-[protein] + phosphate. It carries out the reaction O-phospho-L-threonyl-[protein] + H2O = L-threonyl-[protein] + phosphate. The polypeptide is Probable protein phosphatase 2C 43 (Arabidopsis thaliana (Mouse-ear cress)).